The chain runs to 132 residues: Small ribosomal subunit protein uS12 (132 aa).

A 3-methylthioaspartic acid modification is found at aspartate 89. The interval 102–132 (LDTSGVADRKQSRSKYGAKVPKAGAAPAKKK) is disordered. Positions 118-132 (GAKVPKAGAAPAKKK) are enriched in low complexity.

It belongs to the universal ribosomal protein uS12 family. As to quaternary structure, part of the 30S ribosomal subunit. Contacts proteins S8 and S17. May interact with IF1 in the 30S initiation complex.

Its function is as follows. With S4 and S5 plays an important role in translational accuracy. Interacts with and stabilizes bases of the 16S rRNA that are involved in tRNA selection in the A site and with the mRNA backbone. Located at the interface of the 30S and 50S subunits, it traverses the body of the 30S subunit contacting proteins on the other side and probably holding the rRNA structure together. The combined cluster of proteins S8, S12 and S17 appears to hold together the shoulder and platform of the 30S subunit. This chain is Small ribosomal subunit protein uS12, found in Chlorobaculum tepidum (strain ATCC 49652 / DSM 12025 / NBRC 103806 / TLS) (Chlorobium tepidum).